Here is a 145-residue protein sequence, read N- to C-terminus: NADH-ubiquinone oxidoreductase subunit 8 (145 aa).

4Fe-4S ferredoxin-type domains follow at residues 43 to 73 (LRFYWCGLERCIACRLCDLICPSLALDVRVG) and 83 to 112 (DWFTLSYRRCIYCGFCMHVCPTDAITHSLF). Positions 53, 56, 59, 63, 92, 95, 98, and 102 each coordinate [4Fe-4S] cluster.

The protein belongs to the complex I 23 kDa subunit family. It depends on [4Fe-4S] cluster as a cofactor.

The protein resides in the mitochondrion. It carries out the reaction a ubiquinone + NADH + 5 H(+)(in) = a ubiquinol + NAD(+) + 4 H(+)(out). Its function is as follows. Core subunit of the mitochondrial membrane respiratory chain NADH dehydrogenase (Complex I) that is believed to belong to the minimal assembly required for catalysis. Complex I functions in the transfer of electrons from NADH to the respiratory chain. The immediate electron acceptor for the enzyme is believed to be ubiquinone. May donate electrons to ubiquinone. The protein is NADH-ubiquinone oxidoreductase subunit 8 (M-ISP1) of Trypanosoma brucei brucei.